Consider the following 497-residue polypeptide: Galactose-1-phosphate uridylyltransferase (497 aa).

It belongs to the galactose-1-phosphate uridylyltransferase type 2 family.

The protein localises to the cytoplasm. The catalysed reaction is alpha-D-galactose 1-phosphate + UDP-alpha-D-glucose = alpha-D-glucose 1-phosphate + UDP-alpha-D-galactose. It participates in carbohydrate metabolism; galactose metabolism. The sequence is that of Galactose-1-phosphate uridylyltransferase from Clostridium acetobutylicum (strain ATCC 824 / DSM 792 / JCM 1419 / IAM 19013 / LMG 5710 / NBRC 13948 / NRRL B-527 / VKM B-1787 / 2291 / W).